Consider the following 1493-residue polypeptide: Myosin-13 (1493 aa).

The Myosin N-terminal SH3-like domain maps to Lys18–Met67. Positions Ser72–Thr741 constitute a Myosin motor domain. ATP is bound by residues Gly166–Thr173 and Asn219–Lys227. Actin-binding regions lie at residues Leu504–Leu538, Asp540–Val563, Phe598–Leu622, and Leu622–Asn644. 6 consecutive IQ domains span residues Leu744 to Asn773, Leu767 to Ala796, Arg792 to Gln821, Tyr813 to Val842, Lys836 to Thr865, and Leu859 to Asp888. Residues Thr889–Thr1057 are a coiled coil. A disordered region spans residues Gln1085–Gln1114. Positions Ser1102 to Gln1114 are enriched in basic and acidic residues. A Dilute domain is found at Asp1161 to Asp1444.

The protein belongs to the TRAFAC class myosin-kinesin ATPase superfamily. Myosin family. Plant myosin class XI subfamily. In terms of assembly, homodimer.

Its function is as follows. Myosin heavy chain that is required for the cell cycle-regulated transport of various organelles and proteins for their segregation. Functions by binding with its tail domain to receptor proteins on organelles and exerting force with its N-terminal motor domain against actin filaments, thereby transporting its cargo along polarized actin cables. The sequence is that of Myosin-13 (XI-G) from Arabidopsis thaliana (Mouse-ear cress).